The following is a 241-amino-acid chain: Uridylate kinase (241 aa).

12–15 (KLSG) contacts ATP. G54 contacts UMP. ATP is bound by residues G55 and R59. Residues D74 and 135 to 142 (TGNPFFTT) contribute to the UMP site. ATP is bound by residues T162, Y168, and D171.

Belongs to the UMP kinase family. Homohexamer.

The protein resides in the cytoplasm. It catalyses the reaction UMP + ATP = UDP + ADP. It functions in the pathway pyrimidine metabolism; CTP biosynthesis via de novo pathway; UDP from UMP (UMPK route): step 1/1. With respect to regulation, inhibited by UTP. Functionally, catalyzes the reversible phosphorylation of UMP to UDP. This is Uridylate kinase from Magnetococcus marinus (strain ATCC BAA-1437 / JCM 17883 / MC-1).